The chain runs to 161 residues: Putative pre-16S rRNA nuclease (161 aa).

It belongs to the YqgF nuclease family.

The protein resides in the cytoplasm. Its function is as follows. Could be a nuclease involved in processing of the 5'-end of pre-16S rRNA. The sequence is that of Putative pre-16S rRNA nuclease from Prochlorococcus marinus (strain MIT 9313).